Here is a 665-residue protein sequence, read N- to C-terminus: UvrABC system protein B (665 aa).

The region spanning 25-176 (NSIEKGNRFQ…NQRQLLRDLV (152 aa)) is the Helicase ATP-binding domain. 38 to 45 (GATGTGKT) lines the ATP pocket. The Beta-hairpin signature appears at 91–114 (YYDYYQPEAYIPVSDTYIEKSASI). Residues 429-595 (QVDDLLGEIK…PIVTRSSNAI (167 aa)) enclose the Helicase C-terminal domain. The 36-residue stretch at 626 to 661 (PELIGQLEEQMKEAAKKLEFEEAAKYRDRIQHLRDK) folds into the UVR domain.

Belongs to the UvrB family. As to quaternary structure, forms a heterotetramer with UvrA during the search for lesions. Interacts with UvrC in an incision complex.

It localises to the cytoplasm. Functionally, the UvrABC repair system catalyzes the recognition and processing of DNA lesions. A damage recognition complex composed of 2 UvrA and 2 UvrB subunits scans DNA for abnormalities. Upon binding of the UvrA(2)B(2) complex to a putative damaged site, the DNA wraps around one UvrB monomer. DNA wrap is dependent on ATP binding by UvrB and probably causes local melting of the DNA helix, facilitating insertion of UvrB beta-hairpin between the DNA strands. Then UvrB probes one DNA strand for the presence of a lesion. If a lesion is found the UvrA subunits dissociate and the UvrB-DNA preincision complex is formed. This complex is subsequently bound by UvrC and the second UvrB is released. If no lesion is found, the DNA wraps around the other UvrB subunit that will check the other stand for damage. This is UvrABC system protein B from Gloeothece citriformis (strain PCC 7424) (Cyanothece sp. (strain PCC 7424)).